The primary structure comprises 125 residues: Photoactive yellow protein (125 aa).

In terms of domain architecture, PAS spans 23 to 86 (IDDLAFGAIQ…GRFREGVANG (64 aa)). An S-(4-hydroxycinnamyl)cysteine modification is found at Cys69.

This sequence belongs to the photoactive yellow protein family. The 4-hydroxycinnamic acid (p-coumaric acid) chromophore is covalently bound via a thioester linkage.

Its function is as follows. This photoactive protein is a photoreceptor with kinetics similar to that of rhodopsin. The protein is Photoactive yellow protein (pyp) of Rhodothalassium salexigens (Rhodospirillum salexigens).